The following is a 239-amino-acid chain: Sugar fermentation stimulation protein homolog (239 aa).

This sequence belongs to the SfsA family.

This is Sugar fermentation stimulation protein homolog from Alcanivorax borkumensis (strain ATCC 700651 / DSM 11573 / NCIMB 13689 / SK2).